The chain runs to 917 residues: Chitin synthase 1 (917 aa).

Over residues 1–11 the composition is skewed to basic and acidic residues; that stretch reads MAYHGRGDGYD. Residues 1-56 are disordered; the sequence is MAYHGRGDGYDGHQLQDLPGGHNQGDQHDDAQAPFLSENPMPYDNDRLGTDTPPVR. Over 1–570 the chain is Extracellular; the sequence is MAYHGRGDGY…YKSGHNIVRM (570 aa). N-linked (GlcNAc...) asparagine glycosylation is present at Asn-544. A helical membrane pass occupies residues 571–591; that stretch reads FFFHVQLIYNIANVIFTWFSL. Residues 592 to 629 lie on the Cytoplasmic side of the membrane; that stretch reads ASYWLTTTVIMDLVGTPVTASSSSAEHHGWPFGDTVTP. The helical transmembrane segment at 630 to 650 threads the bilayer; it reads FFNAVLKYIYLAFVILQFILA. Residues 651–664 are Extracellular-facing; it reads LGNRPKGSKWTYIT. The helical transmembrane segment at 665–685 threads the bilayer; sequence SFFVFSLIQSYILVLSGYLVA. Residues 686-716 are Cytoplasmic-facing; the sequence is RAFSVPLDQQLQLDNAKDAMASLFGGSGSAG. Residues 717–737 form a helical membrane-spanning segment; that stretch reads VILVALVTIYGLYFLASFMYL. Residues 738-744 are Extracellular-facing; it reads DPWHMFH. A helical membrane pass occupies residues 745 to 765; that stretch reads SFPYYMLLMSTYINILMIYAF. The Cytoplasmic segment spans residues 766 to 843; sequence NNWHDVSWGT…DLEDSYKSFR (78 aa). A helical transmembrane segment spans residues 844-864; sequence TMLVVSWLFSNCLLAVVITSD. The Extracellular segment spans residues 865-884; sequence NFNTFGIGQTASARTAWFFK. Residues 885-905 form a helical membrane-spanning segment; sequence FLLFATGALSVIRFIGFCWFL. Residues 906-917 lie on the Cytoplasmic side of the membrane; that stretch reads GRTGIMCCFARR.

It belongs to the chitin synthase family. Class III subfamily.

It is found in the cell membrane. The catalysed reaction is [(1-&gt;4)-N-acetyl-beta-D-glucosaminyl](n) + UDP-N-acetyl-alpha-D-glucosamine = [(1-&gt;4)-N-acetyl-beta-D-glucosaminyl](n+1) + UDP + H(+). Its function is as follows. Polymerizes chitin, a structural polymer of the cell wall and septum, by transferring the sugar moiety of UDP-GlcNAc to the non-reducing end of the growing chitin polymer. This chain is Chitin synthase 1 (chs-1), found in Neurospora crassa (strain ATCC 24698 / 74-OR23-1A / CBS 708.71 / DSM 1257 / FGSC 987).